The following is a 1938-amino-acid chain: Myosin-6 (1938 aa).

Residues 31–80 (DIRTECFVPDDKEEYVKAKIVSREGGKVTAETENGKTVTVKEDQVMQQNP) form the Myosin N-terminal SH3-like domain. One can recognise a Myosin motor domain in the interval 84–779 (DKIEDMAMLT…LLGLLEEMRD (696 aa)). Residue Lys-128 is modified to N6,N6,N6-trimethyllysine. ATP is bound at residue 177–184 (GESGAGKT). Thr-378 is modified (phosphothreonine). Ser-416 bears the Phosphoserine mark. Actin-binding stretches follow at residues 656-678 (LNKLMTNLRTTHPHFVRCIIPNE) and 758-772 (KFGHTKVFFKAGLLG). In terms of domain architecture, IQ spans 782-811 (LSRIITRIQAQARGQLMRIEFKKMVERRDA). Calmodulin-binding stretches follow at residues 789 to 806 (IQAQARGQLMRIEFKKMV) and 815 to 832 (IQWNIRAFMGVKNWPWMK). The stretch at 842 to 1938 (KSAETEKEMA…GAKQKMHDEE (1097 aa)) forms a coiled coil. Phosphoserine occurs at positions 1089 and 1138. Residue Tyr-1260 is modified to Phosphotyrosine. Ser-1270 is subject to Phosphoserine. Thr-1276 and Thr-1283 each carry phosphothreonine. Ser-1308 carries the post-translational modification Phosphoserine. Residue Tyr-1309 is modified to Phosphotyrosine. Position 1310 is a phosphothreonine (Thr-1310). Ser-1511 is subject to Phosphoserine. Phosphothreonine occurs at positions 1514 and 1680. Residues 1907-1938 (AEERADIAESQVNKLRAKSRDIGAKQKMHDEE) form a disordered region. The segment covering 1924–1938 (KSRDIGAKQKMHDEE) has biased composition (basic and acidic residues).

The protein belongs to the TRAFAC class myosin-kinesin ATPase superfamily. Myosin family. In terms of assembly, muscle myosin is a hexameric protein that consists of 2 heavy chain subunits (MHC), 2 alkali light chain subunits (MLC) and 2 regulatory light chain subunits (MLC-2).

The protein resides in the cytoplasm. The protein localises to the myofibril. Muscle contraction. This chain is Myosin-6 (Myh6), found in Rattus norvegicus (Rat).